The sequence spans 306 residues: Elongation factor Ts (306 aa).

Positions T80–V83 are involved in Mg(2+) ion dislocation from EF-Tu.

It belongs to the EF-Ts family.

The protein localises to the cytoplasm. In terms of biological role, associates with the EF-Tu.GDP complex and induces the exchange of GDP to GTP. It remains bound to the aminoacyl-tRNA.EF-Tu.GTP complex up to the GTP hydrolysis stage on the ribosome. The sequence is that of Elongation factor Ts from Clostridium acetobutylicum (strain ATCC 824 / DSM 792 / JCM 1419 / IAM 19013 / LMG 5710 / NBRC 13948 / NRRL B-527 / VKM B-1787 / 2291 / W).